A 285-amino-acid polypeptide reads, in one-letter code: 2-hydroxy-6-oxononadienedioate/2-hydroxy-6-oxononatrienedioate hydrolase 1 (285 aa).

The Proton acceptor role is filled by histidine 265.

This sequence belongs to the AB hydrolase superfamily. MhpC family. In terms of assembly, homodimer.

It catalyses the reaction (2Z,4E)-2-hydroxy-6-oxonona-2,4-dienedioate + H2O = (2Z)-2-hydroxypenta-2,4-dienoate + succinate + H(+). It carries out the reaction (2Z,4E,7E)-2-hydroxy-6-oxonona-2,4,7-trienedioate + H2O = (2Z)-2-hydroxypenta-2,4-dienoate + fumarate + H(+). The protein operates within aromatic compound metabolism; 3-phenylpropanoate degradation. Its function is as follows. Catalyzes the cleavage of the C5-C6 bond of 2-hydroxy-6-oxononadienedioate and 2-hydroxy-6-oxononatrienedioate, a dienol ring fission product of the bacterial meta-cleavage pathway for degradation of phenylpropionic acid. In Pseudomonas putida (Arthrobacter siderocapsulatus), this protein is 2-hydroxy-6-oxononadienedioate/2-hydroxy-6-oxononatrienedioate hydrolase 1.